Reading from the N-terminus, the 379-residue chain is Cytochrome b (379 aa).

The next 4 helical transmembrane spans lie at 34–54 (FGSL…LLAM), 78–99 (WLIR…YFHI), 114–134 (WNTG…GYVL), and 179–199 (FFAL…IHLT). The heme b site is built by H84 and H98. The heme b site is built by H183 and H197. H202 contributes to the a ubiquinone binding site. Transmembrane regions (helical) follow at residues 227-247 (LKDI…TFFS), 289-309 (LGGV…PLLH), 321-341 (FSQV…WVGS), and 348-368 (FIAI…VLFP).

The protein belongs to the cytochrome b family. As to quaternary structure, the cytochrome bc1 complex contains 11 subunits: 3 respiratory subunits (MT-CYB, CYC1 and UQCRFS1), 2 core proteins (UQCRC1 and UQCRC2) and 6 low-molecular weight proteins (UQCRH/QCR6, UQCRB/QCR7, UQCRQ/QCR8, UQCR10/QCR9, UQCR11/QCR10 and a cleavage product of UQCRFS1). This cytochrome bc1 complex then forms a dimer. The cofactor is heme b.

Its subcellular location is the mitochondrion inner membrane. Component of the ubiquinol-cytochrome c reductase complex (complex III or cytochrome b-c1 complex) that is part of the mitochondrial respiratory chain. The b-c1 complex mediates electron transfer from ubiquinol to cytochrome c. Contributes to the generation of a proton gradient across the mitochondrial membrane that is then used for ATP synthesis. The protein is Cytochrome b (MT-CYB) of Apteryx australis (Southern brown kiwi).